We begin with the raw amino-acid sequence, 72 residues long: Large ribosomal subunit protein bL31 (72 aa).

Zn(2+) is bound by residues Cys16, Cys18, Cys38, and Cys41.

This sequence belongs to the bacterial ribosomal protein bL31 family. Type A subfamily. As to quaternary structure, part of the 50S ribosomal subunit. It depends on Zn(2+) as a cofactor.

In terms of biological role, binds the 23S rRNA. This Aromatoleum aromaticum (strain DSM 19018 / LMG 30748 / EbN1) (Azoarcus sp. (strain EbN1)) protein is Large ribosomal subunit protein bL31.